The primary structure comprises 415 residues: Beta-1,4-glucuronyltransferase 1 (415 aa).

At 1-8 (MQMSYAIR) the chain is on the cytoplasmic side. Residues 9 to 36 (CAFYQLLLAALMLVAMLQLLYLSLLSGL) form a helical; Signal-anchor for type II membrane protein membrane-spanning segment. The Lumenal portion of the chain corresponds to 37-415 (HGQEEQDQYF…AKYPNSPRRC (379 aa)). Asparagine 204 is a glycosylation site (N-linked (GlcNAc...) asparagine). The Mn(2+) site is built by aspartate 227 and aspartate 229. Asparagine 300 carries an N-linked (GlcNAc...) asparagine glycan.

Belongs to the glycosyltransferase 49 family. Interacts with LARGE1 and LARGE2. Mn(2+) serves as cofactor. As to expression, in the adult, highly expressed in heart, brain, skeletal muscle and kidney and to a lesser extent in placenta, pancreas, spleen, prostate, testis, ovary, small intestine and colon. Very weak expression in lung, liver, thymus and peripheral blood leukocytes. In fetal highly expressed in brain and kidney and to a lesser extent in lung and liver.

Its subcellular location is the golgi apparatus membrane. It carries out the reaction 3-O-[beta-D-Xyl-(1-&gt;4)-Rib-ol-P-Rib-ol-P-3-beta-D-GalNAc-(1-&gt;3)-beta-D-GlcNAc-(1-&gt;4)-(O-6-P-alpha-D-Man)]-Thr-[protein] + UDP-alpha-D-glucuronate = 3-O-[beta-D-GlcA-(1-&gt;3)-beta-D-Xyl-(1-&gt;4)-Rib-ol-P-Rib-ol-P-3-beta-D-GalNAc-(1-&gt;3)-beta-D-GlcNAc-(1-&gt;4)-(O-6-P-alpha-D-Man)]-Thr-[protein] + UDP + H(+). The protein operates within protein modification; protein glycosylation. Functionally, beta-1,4-glucuronyltransferase involved in O-mannosylation of alpha-dystroglycan (DAG1). Transfers a glucuronic acid (GlcA) residue onto a xylose (Xyl) acceptor to produce the glucuronyl-beta-1,4-xylose-beta disaccharide primer, which is further elongated by LARGE1, during synthesis of phosphorylated O-mannosyl glycan. Phosphorylated O-mannosyl glycan is a carbohydrate structure present in alpha-dystroglycan (DAG1), which is required for binding laminin G-like domain-containing extracellular proteins with high affinity. Required for axon guidance; via its function in O-mannosylation of alpha-dystroglycan (DAG1). This is Beta-1,4-glucuronyltransferase 1 from Homo sapiens (Human).